The sequence spans 198 residues: Ribonuclease HII (198 aa).

The region spanning 14-198 (GVIAGVDEVG…KNFAPISRAL (185 aa)) is the RNase H type-2 domain. Residues Asp-20, Glu-21, and Asp-112 each coordinate a divalent metal cation.

The protein belongs to the RNase HII family. Mn(2+) serves as cofactor. Mg(2+) is required as a cofactor.

The protein resides in the cytoplasm. The enzyme catalyses Endonucleolytic cleavage to 5'-phosphomonoester.. Endonuclease that specifically degrades the RNA of RNA-DNA hybrids. This is Ribonuclease HII from Wolbachia pipientis wMel.